Here is a 739-residue protein sequence, read N- to C-terminus: MPNMEPTTKEIKEQKIYQEMGLTDSEYELVCSILGREPNYTETGLFSVMWSEHCSYKNSKPVLRKFPTEGKQVLQGPGEGAGIVDIGDGLGVAFKVESHNHPSYVEPYQGAATGVGGIIRDVFSMGARPIAMLNSLRFGELDTPHAKYLVSEVVAGIAGYGNSIGIPTVGGEIQFDPCYTKNPLVNAMCVGLIEAKDIQKGQAKGIGNPVMYVGAKTGRDGIHGATFASVEFSEEGEQQRSAVQVGDPFMEKLLLEACLDVIRDHSDILVGIQDMGAAGLVSSSSEMASKAGAGLELIMDDVPQRELNMTPYEMLLSESQERMLLCVKKGHVEEIQALFERYGLEAVVIGQVTDDKMYKIIHHGEVVANVPVDALAEDAPVYHKPSKEPARYQAFQEEESFVPVMEDVVGVWKELLAQPTIASKRHIYEQYDYQVRTDTAVVPGSDAAIVRVRGTEKAIAMTTDCNSRYLYLDPKVGGAIAVAEAARNIVCSGGKPLAITDGLNFGNPEKPEIFWEIEKAADGISAACLELDTPVISGNVSLYNETDGTGIYPTPVIGMVGLVEDLAHITTQDFKNSGDVIFLIGETKAEYSGSELQKLQQGKISGRAPELDLTTEKKYQQLLLTAIQEGLVASSHDLAEGGFGVALAEATFKAGLGADVEVPFELNQLFSESQSRFLVSVKPENEAAFAQLMELEKVYRLGVVTEDDTIRVKHKEDQVTAKTTELRSIWQGAIPCLLK.

Residue His-53 is part of the active site. Residues Tyr-56 and Lys-95 each contribute to the ATP site. Glu-97 serves as a coordination point for Mg(2+). Substrate-binding positions include 98–101 (SHNH) and Arg-120. Residue His-99 is the Proton acceptor of the active site. Asp-121 contributes to the Mg(2+) binding site. Gln-244 contacts substrate. Mg(2+) is bound at residue Asp-274. 318 to 320 (ESQ) is a substrate binding site. ATP is bound by residues Asp-501 and Gly-538. Residue Asn-539 participates in Mg(2+) binding. Ser-541 provides a ligand contact to substrate.

The protein belongs to the FGAMS family. Monomer. Part of the FGAM synthase complex composed of 1 PurL, 1 PurQ and 2 PurS subunits.

The protein resides in the cytoplasm. It carries out the reaction N(2)-formyl-N(1)-(5-phospho-beta-D-ribosyl)glycinamide + L-glutamine + ATP + H2O = 2-formamido-N(1)-(5-O-phospho-beta-D-ribosyl)acetamidine + L-glutamate + ADP + phosphate + H(+). The protein operates within purine metabolism; IMP biosynthesis via de novo pathway; 5-amino-1-(5-phospho-D-ribosyl)imidazole from N(2)-formyl-N(1)-(5-phospho-D-ribosyl)glycinamide: step 1/2. Part of the phosphoribosylformylglycinamidine synthase complex involved in the purines biosynthetic pathway. Catalyzes the ATP-dependent conversion of formylglycinamide ribonucleotide (FGAR) and glutamine to yield formylglycinamidine ribonucleotide (FGAM) and glutamate. The FGAM synthase complex is composed of three subunits. PurQ produces an ammonia molecule by converting glutamine to glutamate. PurL transfers the ammonia molecule to FGAR to form FGAM in an ATP-dependent manner. PurS interacts with PurQ and PurL and is thought to assist in the transfer of the ammonia molecule from PurQ to PurL. This chain is Phosphoribosylformylglycinamidine synthase subunit PurL, found in Listeria monocytogenes serotype 4b (strain F2365).